We begin with the raw amino-acid sequence, 101 residues long: Small ribosomal subunit protein uS14 (101 aa).

Residues 1–24 (MAKVSSIKKNEKRKKLSQSLHNKR) are disordered. Residues 10-24 (NEKRKKLSQSLHNKR) are compositionally biased toward basic residues.

This sequence belongs to the universal ribosomal protein uS14 family. In terms of assembly, part of the 30S ribosomal subunit. Contacts proteins S3 and S10.

Functionally, binds 16S rRNA, required for the assembly of 30S particles and may also be responsible for determining the conformation of the 16S rRNA at the A site. This is Small ribosomal subunit protein uS14 from Rickettsia bellii (strain OSU 85-389).